Here is a 390-residue protein sequence, read N- to C-terminus: Putative MSV199 domain-containing protein 211L (390 aa).

A coiled-coil region spans residues H181–L263.

The protein is Putative MSV199 domain-containing protein 211L of Acheta domesticus (House cricket).